A 601-amino-acid chain; its full sequence is Translation initiation factor IF-2 (601 aa).

A disordered region spans residues Gly54 to Glu101. The span at Ala57 to Thr89 shows a compositional bias: low complexity. Residues His104–Arg273 enclose the tr-type G domain. The tract at residues Gly113 to Thr120 is G1. A GTP-binding site is contributed by Gly113–Thr120. A G2 region spans residues Gly138–His142. Positions Asp159 to Gly162 are G3. GTP-binding positions include Asp159–His163 and Asn213–Asp216. Residues Asn213–Asp216 are G4. Residues Ser249–Lys251 form a G5 region.

It belongs to the TRAFAC class translation factor GTPase superfamily. Classic translation factor GTPase family. IF-2 subfamily.

The protein localises to the cytoplasm. One of the essential components for the initiation of protein synthesis. Protects formylmethionyl-tRNA from spontaneous hydrolysis and promotes its binding to the 30S ribosomal subunits. Also involved in the hydrolysis of GTP during the formation of the 70S ribosomal complex. This Deinococcus geothermalis (strain DSM 11300 / CIP 105573 / AG-3a) protein is Translation initiation factor IF-2.